Here is a 918-residue protein sequence, read N- to C-terminus: Plasma membrane ATPase 1 (918 aa).

Low complexity predominate over residues 1–18 (MTDTSSSSSSSSASSVSA). Positions 1–84 (MTDTSSSSSS…VPEEYLQTDP (84 aa)) are disordered. Topologically, residues 1 to 115 (MTDTSSSSSS…ADEKESLVVK (115 aa)) are cytoplasmic. A compositionally biased stretch (acidic residues) spans 33–47 (AASESSDDDDIDALI). Serine 61 is modified (phosphoserine). A helical membrane pass occupies residues 116 to 136 (FVMFFVGPIQFVMEAAAILAA). At 137 to 140 (GLSD) the chain is on the extracellular side. A helical membrane pass occupies residues 141–160 (WVDFGVICGLLMLNAGVGFV). At 161-291 (QEFQAGSIVD…GQGHFTEVLN (131 aa)) the chain is on the cytoplasmic side. The residue at position 175 (threonine 175) is a Phosphothreonine. Lysine 252 is covalently cross-linked (Glycyl lysine isopeptide (Lys-Gly) (interchain with G-Cter in ubiquitin)). The chain crosses the membrane as a helical span at residues 292–313 (GIGIILLVLVIATLLLVWTACF). At 314 to 325 (YRTNGIVRILRY) the chain is on the extracellular side. A helical transmembrane segment spans residues 326-347 (TLGITIIGVPVGLPAVVTTTMA). At 348 to 719 (VGAAYLAKKQ…IAILDNSLDI (372 aa)) the chain is on the cytoplasmic side. Aspartate 378 (4-aspartylphosphate intermediate) is an active-site residue. Lysine 555 participates in a covalent cross-link: Glycyl lysine isopeptide (Lys-Gly) (interchain with G-Cter in ubiquitin). Mg(2+)-binding residues include aspartate 634 and aspartate 638. A helical transmembrane segment spans residues 720–738 (DLIVFIAIFADVATLAIAY). The Extracellular segment spans residues 739–754 (DNAPYSPKPVKWNLPR). A helical transmembrane segment spans residues 755–774 (LWGMSIILGIVLAIGSWITL). Over 775–824 (TTMFLPKGGIIQNFGAMNGIMFLQISLTENWLIFITRAAGPFWSSIPSWQ) the chain is Cytoplasmic. Residues 825–845 (LAGAVFAVDIIATMFTLFGWW) form a helical membrane-spanning segment. Residues 846 to 857 (SENWTDIVTVVR) lie on the Extracellular side of the membrane. Residues 858 to 874 (VWIWSIGIFCVLGGFYY) traverse the membrane as a helical segment. Residues 875–918 (EMSTSEAFDRLMNGKPMKEKKSTRSVEDFMAAMQRVSTQHEKET) are Cytoplasmic-facing. Serine 911 bears the Phosphoserine mark. Residues threonine 912 and threonine 918 each carry the phosphothreonine modification.

It belongs to the cation transport ATPase (P-type) (TC 3.A.3) family. Type IIIA subfamily. Interacts with its cargot receptor EXP1 for its transport within the cell and maturation. In terms of processing, phosphorylated on multiple Ser and Thr residues.

It is found in the cell membrane. The catalysed reaction is ATP + H2O + H(+)(in) = ADP + phosphate + 2 H(+)(out). The plasma membrane ATPase of plants and fungi is a hydrogen ion pump. The proton gradient it generates drives the active transport of nutrients by H(+)-symport. The resulting external acidification and/or internal alkinization may mediate growth responses. The protein is Plasma membrane ATPase 1 (PMA1) of Saccharomyces cerevisiae (strain ATCC 204508 / S288c) (Baker's yeast).